The chain runs to 227 residues: Deoxyribose-phosphate aldolase (227 aa).

Aspartate 98 acts as the Proton donor/acceptor in catalysis. Catalysis depends on lysine 161, which acts as the Schiff-base intermediate with acetaldehyde. The active-site Proton donor/acceptor is the lysine 191.

The protein belongs to the DeoC/FbaB aldolase family. DeoC type 1 subfamily.

The protein resides in the cytoplasm. It catalyses the reaction 2-deoxy-D-ribose 5-phosphate = D-glyceraldehyde 3-phosphate + acetaldehyde. The protein operates within carbohydrate degradation; 2-deoxy-D-ribose 1-phosphate degradation; D-glyceraldehyde 3-phosphate and acetaldehyde from 2-deoxy-alpha-D-ribose 1-phosphate: step 2/2. Catalyzes a reversible aldol reaction between acetaldehyde and D-glyceraldehyde 3-phosphate to generate 2-deoxy-D-ribose 5-phosphate. This is Deoxyribose-phosphate aldolase from Frankia alni (strain DSM 45986 / CECT 9034 / ACN14a).